The sequence spans 282 residues: Protein canopy homolog 3 (282 aa).

Positions 1 to 33 are cleaved as a signal peptide; the sequence is MEPLPEPASGPRPRPHRLLLLSLLLLLLPLLPA. One can recognise a Saposin B-type domain in the interval 53-275; that stretch reads SKCEVCKYVA…EGIQKASPLT (223 aa). Disulfide bonds link Cys55–Cys212, Cys58–Cys200, and Cys110–Cys172. A glycan (N-linked (GlcNAc...) asparagine) is linked at Asn159. Positions 159-185 form a coiled coil; the sequence is NETSAEVADLKKQCDVLVEEFEEVIED. The tract at residues 221–282 is disordered; it reads KGDTAALGGK…PLTHSPPDEL (62 aa). Over residues 255–266 the composition is skewed to acidic residues; that stretch reads DLDGDPSPEEDE.

It belongs to the canopy family. Interacts with HSP90B1; this interaction is disrupted in the presence of ATP. Interacts with TLR1, TLR2, TLR4 and TLR9.

It localises to the endoplasmic reticulum. In terms of biological role, toll-like receptor (TLR)-specific co-chaperone for HSP90B1. Required for proper TLR folding, except that of TLR3, and hence controls TLR exit from the endoplasmic reticulum. Consequently, required for both innate and adaptive immune responses. This chain is Protein canopy homolog 3 (CNPY3), found in Bos taurus (Bovine).